The chain runs to 811 residues: MNVALQELGAGSNMVEYKRATLRDEDAPETPVEGGASPDAMEVGKGASPFSPGPSPGMTPGTPRSSGLFWRVTCPHLRSISGLCSRTMVGFQKGTRQLLGSRTQLELVLAGASLLLAALLLGCLVALGVQYHRDPSHSTCLTEACIRVAGKILESLDRGVSPCEDFYQFSCGGWIRRNPLPDGRSRWNTFNSLWDQNQAILKHLLENTTFNSSSEAEQKTQRFYLSCLQVERIEELGAQPLRDLIEKIGGWNITGPWDQDNFMEVLKAVAGTYRATPFFTVYISADSKSSNSNVIQVDQSGLFLPSRDYYLNRTANEKVLTAYLDYMEELGMLLGGRPTSTREQMQQVLELEIQLANITVPQDQRRDEEKIYHKMSISELQALAPSMDWLEFLSFLLSPLELSDSEPVVVYGMDYLQQVSELINRTEPSILNNYLIWNLVQKTTSSLDRRFESAQEKLLETLYGTKKSCVPRWQTCISNTDDALGFALGSLFVKATFDRQSKEIAEGMISEIRTAFEEALGQLVWMDEKTRQAAKEKADAIYDMIGFPDFILEPKELDDVYDGYEISEDSFFQNMLNLYNFSAKVMADQLRKPPSRDQWSMTPQTVNAYYLPTKNEIVFPAGILQAPFYARNHPKALNFGGIGVVMGHELTHAFDDQGREYDKEGNLRPWWQNESLAAFRNHTACMEEQYNQYQVNGERLNGRQTLGENIADNGGLKAAYNAYKAWLRKHGEEQQLPAVGLTNHQLFFVGFAQVWCSVRTPESSHEGLVTDPHSPARFRVLGTLSNSRDFLRHFGCPVGSPMNPGQLCEVW.

Residues 1 to 106 (MNVALQELGA…QLLGSRTQLE (106 aa)) lie on the Cytoplasmic side of the membrane. The disordered stretch occupies residues 22–64 (LRDEDAPETPVEGGASPDAMEVGKGASPFSPGPSPGMTPGTPR). Residues 107 to 127 (LVLAGASLLLAALLLGCLVAL) traverse the membrane as a helical; Signal-anchor for type II membrane protein segment. At 128–811 (GVQYHRDPSH…MNPGQLCEVW (684 aa)) the chain is on the lumenal side. Residues 139 to 811 (TCLTEACIRV…MNPGQLCEVW (673 aa)) enclose the Peptidase M13 domain. Disulfide bonds link Cys-140-Cys-145, Cys-163-Cys-796, Cys-171-Cys-756, Cys-227-Cys-476, and Cys-685-Cys-808. 7 N-linked (GlcNAc...) asparagine glycosylation sites follow: Asn-207, Asn-211, Asn-252, Asn-312, Asn-357, Asn-424, and Asn-580. His-648 contacts Zn(2+). The active site involves Glu-649. A Zn(2+)-binding site is contributed by His-652. Residues Asn-673 and Asn-681 are each glycosylated (N-linked (GlcNAc...) asparagine). Glu-708 provides a ligand contact to Zn(2+). The active-site Proton donor is Asp-712.

It belongs to the peptidase M13 family. It depends on Zn(2+) as a cofactor.

The protein resides in the golgi apparatus membrane. The protein localises to the cytoplasmic vesicle. It localises to the secretory vesicle membrane. It carries out the reaction Hydrolysis of the 21-Trp-|-Val-22 bond in big endothelin to form endothelin 1.. Converts big endothelin-1 to endothelin-1. Also involved in the processing of various neuroendocrine peptides, including neurotensin, angiotensin I, substance P, proenkephalin-derived peptides, and prodynorphin-derived peptides. May play a role in amyloid-beta processing. The protein is Endothelin-converting enzyme 2 of Homo sapiens (Human).